The sequence spans 319 residues: Cobalamin biosynthesis protein CobD (319 aa).

4 helical membrane-spanning segments follow: residues 55–75 (AVMW…VLAL), 78–98 (EIHP…VLAG), 153–173 (VDGI…LAMA), and 296–316 (LMWV…CLLV).

The protein belongs to the CobD/CbiB family.

Its subcellular location is the cell membrane. It participates in cofactor biosynthesis; adenosylcobalamin biosynthesis. Converts cobyric acid to cobinamide by the addition of aminopropanol on the F carboxylic group. The chain is Cobalamin biosynthesis protein CobD from Citrobacter koseri (strain ATCC BAA-895 / CDC 4225-83 / SGSC4696).